The sequence spans 613 residues: Zinc metalloproteinase-disintegrin-like EoVMP2 (613 aa).

The first 20 residues, 1–20 (MMQVLLVTICLAVFPYQGSS), serve as a signal peptide directing secretion. The propeptide occupies 21-194 (IILESGNVND…EASQLFATSE (174 aa)). The residue at position 195 (Gln195) is a Pyrrolidone carboxylic acid. The Peptidase M12B domain maps to 201 to 397 (RYIEFFIVVD…RNPKCMINKP (197 aa)). Glu204 contacts Ca(2+). Asn219 carries N-linked (GlcNAc...) asparagine glycosylation. Residue Asp288 participates in Ca(2+) binding. Disulfide bonds link Cys312-Cys392, Cys352-Cys376, and Cys354-Cys359. His337 contacts Zn(2+). The active site involves Glu338. Positions 341 and 347 each coordinate Zn(2+). The N-linked (GlcNAc...) asparagine glycan is linked to Asn375. Cys392, Asn395, Val407, Asn410, Leu412, Glu414, Glu417, and Asp420 together coordinate Ca(2+). In terms of domain architecture, Disintegrin spans 405–491 (PPVCGNGLLE…DCPIDGFHAN (87 aa)). 14 cysteine pairs are disulfide-bonded: Cys408-Cys437, Cys419-Cys432, Cys421-Cys427, Cys431-Cys454, Cys445-Cys451, Cys450-Cys476, Cys463-Cys483, Cys470-Cys502, Cys495-Cys507, Cys514-Cys564, Cys529-Cys575, Cys542-Cys552, Cys559-Cys601, and Cys595-Cys606. Positions 469–471 (DCD) match the D/ECD-tripeptide motif.

It belongs to the venom metalloproteinase (M12B) family. P-III subfamily. P-IIIa sub-subfamily. In terms of assembly, monomer. The cofactor is Zn(2+). In terms of tissue distribution, expressed by the venom gland.

The protein localises to the secreted. In terms of biological role, snake venom zinc metalloprotease that possesses high hemorrhagic activity. It inhibits collagen-induced platelet aggregation and activates prothrombin (F2). The polypeptide is Zinc metalloproteinase-disintegrin-like EoVMP2 (Svmp3-Eoc22) (Echis ocellatus (Ocellated saw-scaled viper)).